Here is a 118-residue protein sequence, read N- to C-terminus: Ferredoxin-thioredoxin reductase, catalytic chain (118 aa).

Residue Cys57 coordinates [4Fe-4S] cluster. The active-site Nucleophile is the Cys59. A disulfide bond links Cys59 and Cys89. Residues Cys76, Cys78, and Cys87 each contribute to the [4Fe-4S] cluster site.

It belongs to the ferredoxin thioredoxin reductase beta subunit family. As to quaternary structure, heterodimer of subunit A (variable subunit) and subunit B (catalytic subunit). Heterodimeric FTR forms a complex with ferredoxin and thioredoxin. It depends on [4Fe-4S] cluster as a cofactor.

The protein resides in the plastid. It is found in the chloroplast. The catalysed reaction is [thioredoxin]-disulfide + 2 reduced [2Fe-2S]-[ferredoxin] + 2 H(+) = [thioredoxin]-dithiol + 2 oxidized [2Fe-2S]-[ferredoxin]. In terms of biological role, catalytic subunit of the ferredoxin-thioredoxin reductase (FTR), which catalyzes the two-electron reduction of thioredoxins by the electrons provided by reduced ferredoxin. The protein is Ferredoxin-thioredoxin reductase, catalytic chain (ftrB) of Porphyra purpurea (Red seaweed).